The following is a 364-amino-acid chain: Chorismate synthase (364 aa).

R48 is an NADP(+) binding site. FMN-binding positions include 131-133 (RSS), 243-244 (NA), G288, 303-307 (KPTSS), and R329.

The protein belongs to the chorismate synthase family. In terms of assembly, homotetramer. It depends on FMNH2 as a cofactor.

The enzyme catalyses 5-O-(1-carboxyvinyl)-3-phosphoshikimate = chorismate + phosphate. Its pathway is metabolic intermediate biosynthesis; chorismate biosynthesis; chorismate from D-erythrose 4-phosphate and phosphoenolpyruvate: step 7/7. Its function is as follows. Catalyzes the anti-1,4-elimination of the C-3 phosphate and the C-6 proR hydrogen from 5-enolpyruvylshikimate-3-phosphate (EPSP) to yield chorismate, which is the branch point compound that serves as the starting substrate for the three terminal pathways of aromatic amino acid biosynthesis. This reaction introduces a second double bond into the aromatic ring system. In Brucella abortus (strain S19), this protein is Chorismate synthase.